Consider the following 69-residue polypeptide: Cytochrome c oxidase subunit 8A, mitochondrial (69 aa).

The N-terminal 25 residues, 1–25 (MSSLTPLLLRSLTGPARRLMVPRAQ), are a transit peptide targeting the mitochondrion. An SIFI-degron motif is present at residues 2 to 19 (SSLTPLLLRSLTGPARRL). Over 26–36 (VHSKPPREQLG) the chain is Mitochondrial matrix. Residues 37–60 (VLDITIGLTSCFVCCLLPAGWVLS) traverse the membrane as a helical segment. Over 61 to 69 (HLESYKKRE) the chain is Mitochondrial intermembrane.

The protein belongs to the cytochrome c oxidase VIII family. As to quaternary structure, component of the cytochrome c oxidase (complex IV, CIV), a multisubunit enzyme composed of 14 subunits. The complex is composed of a catalytic core of 3 subunits MT-CO1, MT-CO2 and MT-CO3, encoded in the mitochondrial DNA, and 11 supernumerary subunits COX4I, COX5A, COX5B, COX6A, COX6B, COX6C, COX7A, COX7B, COX7C, COX8 and NDUFA4, which are encoded in the nuclear genome. The complex exists as a monomer or a dimer and forms supercomplexes (SCs) in the inner mitochondrial membrane with NADH-ubiquinone oxidoreductase (complex I, CI) and ubiquinol-cytochrome c oxidoreductase (cytochrome b-c1 complex, complex III, CIII), resulting in different assemblies (supercomplex SCI(1)III(2)IV(1) and megacomplex MCI(2)III(2)IV(2)). In terms of processing, in response to mitochondrial stress, the precursor protein is ubiquitinated by the SIFI complex in the cytoplasm before mitochondrial import, leading to its degradation. Within the SIFI complex, UBR4 initiates ubiquitin chain that are further elongated or branched by KCMF1.

It localises to the mitochondrion inner membrane. It participates in energy metabolism; oxidative phosphorylation. Component of the cytochrome c oxidase, the last enzyme in the mitochondrial electron transport chain which drives oxidative phosphorylation. The respiratory chain contains 3 multisubunit complexes succinate dehydrogenase (complex II, CII), ubiquinol-cytochrome c oxidoreductase (cytochrome b-c1 complex, complex III, CIII) and cytochrome c oxidase (complex IV, CIV), that cooperate to transfer electrons derived from NADH and succinate to molecular oxygen, creating an electrochemical gradient over the inner membrane that drives transmembrane transport and the ATP synthase. Cytochrome c oxidase is the component of the respiratory chain that catalyzes the reduction of oxygen to water. Electrons originating from reduced cytochrome c in the intermembrane space (IMS) are transferred via the dinuclear copper A center (CU(A)) of subunit 2 and heme A of subunit 1 to the active site in subunit 1, a binuclear center (BNC) formed by heme A3 and copper B (CU(B)). The BNC reduces molecular oxygen to 2 water molecules using 4 electrons from cytochrome c in the IMS and 4 protons from the mitochondrial matrix. The sequence is that of Cytochrome c oxidase subunit 8A, mitochondrial (Cox8a) from Rattus norvegicus (Rat).